The chain runs to 504 residues: Anaerobic nitric oxide reductase transcription regulator NorR (504 aa).

Asp57 carries the 4-aspartylphosphate modification. A Sigma-54 factor interaction domain is found at 187 to 416 (MIGLSPGMTQ…LEHAIHRAVV (230 aa)). ATP contacts are provided by residues 215–222 (GETGTGKE) and 278–287 (ADNGTLFLDE). Positions 479–498 (WAACARMLETDVANLHRLAK) form a DNA-binding region, H-T-H motif.

Its pathway is nitrogen metabolism; nitric oxide reduction. Required for the expression of anaerobic nitric oxide (NO) reductase, acts as a transcriptional activator for at least the norVW operon. Activation also requires sigma-54. This chain is Anaerobic nitric oxide reductase transcription regulator NorR, found in Escherichia coli (strain K12 / MC4100 / BW2952).